The chain runs to 242 residues: MSMKILPAIDIKDGQAVRLFKGDFSQKTVVNPDVLEQARVFKEAGVTMIHVVDLEGALEGRAANRDLIAQIKAETGLAIQVGGGIRSLEQIEDYLAVGIDRVIIGSMAVKNPEFVEAALERFGSGKIVIGIDAKEGLVATEGWLETSNQDYISLALAMEKIGVRLFVYTDVDRDGTLTGPNIQHYQKLLASLKHAQVIASGGIQSADDLEEMKKLGLAGAIVGKAYYSGRISLEQIKEAERG.

Catalysis depends on aspartate 10, which acts as the Proton acceptor. The active-site Proton donor is aspartate 132.

The protein belongs to the HisA/HisF family.

Its subcellular location is the cytoplasm. It carries out the reaction 1-(5-phospho-beta-D-ribosyl)-5-[(5-phospho-beta-D-ribosylamino)methylideneamino]imidazole-4-carboxamide = 5-[(5-phospho-1-deoxy-D-ribulos-1-ylimino)methylamino]-1-(5-phospho-beta-D-ribosyl)imidazole-4-carboxamide. The protein operates within amino-acid biosynthesis; L-histidine biosynthesis; L-histidine from 5-phospho-alpha-D-ribose 1-diphosphate: step 4/9. The polypeptide is 1-(5-phosphoribosyl)-5-[(5-phosphoribosylamino)methylideneamino] imidazole-4-carboxamide isomerase (Streptococcus sanguinis (strain SK36)).